We begin with the raw amino-acid sequence, 139 residues long: Aspartate 1-decarboxylase (139 aa).

Residue Ser25 is the Schiff-base intermediate with substrate; via pyruvic acid of the active site. Ser25 is modified (pyruvic acid (Ser)). Thr57 lines the substrate pocket. Tyr58 acts as the Proton donor in catalysis. 73–75 (GAA) lines the substrate pocket. Residues 117–139 (LGADPAEPVPGSDQARSPQAVTA) are disordered. Over residues 130–139 (QARSPQAVTA) the composition is skewed to polar residues.

Belongs to the PanD family. In terms of assembly, heterooctamer of four alpha and four beta subunits. The cofactor is pyruvate. Is synthesized initially as an inactive proenzyme, which is activated by self-cleavage at a specific serine bond to produce a beta-subunit with a hydroxyl group at its C-terminus and an alpha-subunit with a pyruvoyl group at its N-terminus.

It is found in the cytoplasm. The catalysed reaction is L-aspartate + H(+) = beta-alanine + CO2. It functions in the pathway cofactor biosynthesis; (R)-pantothenate biosynthesis; beta-alanine from L-aspartate: step 1/1. Catalyzes the pyruvoyl-dependent decarboxylation of aspartate to produce beta-alanine. In Streptomyces avermitilis (strain ATCC 31267 / DSM 46492 / JCM 5070 / NBRC 14893 / NCIMB 12804 / NRRL 8165 / MA-4680), this protein is Aspartate 1-decarboxylase.